The following is a 125-amino-acid chain: Translation initiation factor 5A (125 aa).

Position 35 is a hypusine (Lys35).

This sequence belongs to the eIF-5A family.

The protein localises to the cytoplasm. Its function is as follows. Functions by promoting the formation of the first peptide bond. This Methanosphaerula palustris (strain ATCC BAA-1556 / DSM 19958 / E1-9c) protein is Translation initiation factor 5A (eIF5A).